The primary structure comprises 222 residues: Large ribosomal subunit protein bL25 (222 aa).

The protein belongs to the bacterial ribosomal protein bL25 family. CTC subfamily. In terms of assembly, part of the 50S ribosomal subunit; part of the 5S rRNA/L5/L18/L25 subcomplex. Contacts the 5S rRNA. Binds to the 5S rRNA independently of L5 and L18.

This is one of the proteins that binds to the 5S RNA in the ribosome where it forms part of the central protuberance. The protein is Large ribosomal subunit protein bL25 of Ruthia magnifica subsp. Calyptogena magnifica.